We begin with the raw amino-acid sequence, 217 residues long: Thymidylate kinase (217 aa).

7 to 14 (GIEGAGKS) contacts ATP.

Belongs to the thymidylate kinase family.

The catalysed reaction is dTMP + ATP = dTDP + ADP. In terms of biological role, phosphorylation of dTMP to form dTDP in both de novo and salvage pathways of dTTP synthesis. The protein is Thymidylate kinase of Desulfovibrio desulfuricans (strain ATCC 27774 / DSM 6949 / MB).